The primary structure comprises 83 residues: UPF0346 protein M28_Spy0369 (83 aa).

This sequence belongs to the UPF0346 family.

The protein is UPF0346 protein M28_Spy0369 of Streptococcus pyogenes serotype M28 (strain MGAS6180).